The following is a 500-amino-acid chain: Glucose-6-phosphate isomerase (500 aa).

Glu332 acts as the Proton donor in catalysis. Residues His363 and Lys473 contribute to the active site.

This sequence belongs to the GPI family.

The protein resides in the cytoplasm. The catalysed reaction is alpha-D-glucose 6-phosphate = beta-D-fructose 6-phosphate. Its pathway is carbohydrate biosynthesis; gluconeogenesis. It participates in carbohydrate degradation; glycolysis; D-glyceraldehyde 3-phosphate and glycerone phosphate from D-glucose: step 2/4. In terms of biological role, catalyzes the reversible isomerization of glucose-6-phosphate to fructose-6-phosphate. The polypeptide is Glucose-6-phosphate isomerase (Rhizorhabdus wittichii (strain DSM 6014 / CCUG 31198 / JCM 15750 / NBRC 105917 / EY 4224 / RW1) (Sphingomonas wittichii)).